Here is a 541-residue protein sequence, read N- to C-terminus: Zinc finger protein 329 (541 aa).

S50 is subject to Phosphoserine. 12 C2H2-type zinc fingers span residues 203–225 (YRCT…HRTH), 231–253 (YTCN…QRIH), 259–281 (YECS…QRIH), 287–309 (YECL…QRTH), 315–337 (YRCN…LRIH), 343–365 (YECS…ERTH), 371–393 (FECA…QKIH), 399–421 (YECK…QRIH), 427–449 (YGCN…QRTH), 455–477 (YECN…QRIH), 483–505 (YQCP…QRLH), and 511–533 (SRCP…QRAH).

It belongs to the krueppel C2H2-type zinc-finger protein family.

It localises to the nucleus. In terms of biological role, may be involved in transcriptional regulation. This Homo sapiens (Human) protein is Zinc finger protein 329 (ZNF329).